We begin with the raw amino-acid sequence, 397 residues long: Lipid-A-disaccharide synthase (397 aa).

This sequence belongs to the LpxB family.

The catalysed reaction is a lipid X + a UDP-2-N,3-O-bis[(3R)-3-hydroxyacyl]-alpha-D-glucosamine = a lipid A disaccharide + UDP + H(+). It participates in bacterial outer membrane biogenesis; LPS lipid A biosynthesis. Condensation of UDP-2,3-diacylglucosamine and 2,3-diacylglucosamine-1-phosphate to form lipid A disaccharide, a precursor of lipid A, a phosphorylated glycolipid that anchors the lipopolysaccharide to the outer membrane of the cell. In Mannheimia succiniciproducens (strain KCTC 0769BP / MBEL55E), this protein is Lipid-A-disaccharide synthase.